An 815-amino-acid chain; its full sequence is Vacuolar proton translocating ATPase 100 kDa subunit (815 aa).

Residues 1-402 (MSFLRPSIWR…NAYGIAHYRE (402 aa)) lie on the Cytoplasmic side of the membrane. The chain crosses the membrane as a helical span at residues 403 to 421 (VNPAVLTIVTFPFLFGVMF). The Vacuolar portion of the chain corresponds to 422 to 423 (GD). The chain crosses the membrane as a helical span at residues 424–440 (VGHGALLLLSALGLISL). Over 441-454 (EKKLAGKKLNELIQ) the chain is Cytoplasmic. Residues 455-484 (MPFDGRYVLFLMSLFSIYVGFIYNECFSIP) traverse the membrane as a helical segment. Topologically, residues 485–530 (MNIFGSQYNLNSTTGLYTYQHTDRVYPVGVDPLWKGAPNELVYYNS) are vacuolar. The helical transmembrane segment at 531-550 (FKMKLSIIFGVVQMSVGICF) threads the bilayer. The Cytoplasmic portion of the chain corresponds to 551–571 (SLLNYLNQKGPIKIVNILTQF). A helical transmembrane segment spans residues 572-592 (VPQMIFLWSIFGYMSVLIILK). Over 593–639 (WVVPYRSFEVDKVDPPFILPTIIAMFLSPGGTPDVVFFSGQGAVQTA) the chain is Vacuolar. Residues 640–659 (LLFLALISIPVMLVIKPLFM) traverse the membrane as a helical segment. The Cytoplasmic segment spans residues 660–706 (KRFHFQEVERKKLGHHEEEHDDEALYTGHHGEEFEMGEVFVHQVIHT). A helical transmembrane segment spans residues 707-731 (IEFVLGAVSNTASYLRLWALSLAHS). Residues 732–749 (ELSSVFWERILIGQVERG) lie on the Vacuolar side of the membrane. The helical transmembrane segment at 750–788 (NPFLAFVGFGAWLGASVAVLLLMESLSAFLHALRLHWVE) threads the bilayer. Residues 789–815 (FQNKFYIGDGVRFIPYSATRILSEDDE) lie on the Cytoplasmic side of the membrane.

This sequence belongs to the V-ATPase 116 kDa subunit family. In terms of assembly, the V-ATPase is a heteromultimeric enzyme.

It localises to the cytoplasmic vesicle membrane. Its subcellular location is the endosome membrane. It is found in the vacuole membrane. The protein resides in the lysosome membrane. Its function is as follows. Essential component of the vacuolar proton pump (V-ATPase), a multimeric enzyme that catalyzes the translocation of protons across the membranes. Required for assembly and activity of the V-ATPase. Required in both the contractile vacuole system and the endosomal/lysosomal system. Also required for cytosolic pH regulation. This is Vacuolar proton translocating ATPase 100 kDa subunit (vatM) from Dictyostelium discoideum (Social amoeba).